Consider the following 174-residue polypeptide: Inactive signal peptidase IA (174 aa).

Topologically, residues 1-7 (MKKVVKY) are cytoplasmic. Residues 8–28 (LISLILAIIIVLFVQTFVIVG) form a helical membrane-spanning segment. Residues 29-174 (HVIPNNDMSP…FSKWTIQFKS (146 aa)) are Extracellular-facing.

The protein belongs to the peptidase S26 family.

Its subcellular location is the cell membrane. Its function is as follows. Catalytically inactive. This chain is Inactive signal peptidase IA (spsA), found in Staphylococcus aureus (strain Mu50 / ATCC 700699).